A 383-amino-acid chain; its full sequence is Acetylornithine deacetylase (383 aa).

His80 serves as a coordination point for Zn(2+). Asp82 is an active-site residue. A Zn(2+)-binding site is contributed by Asp112. Residue Glu144 is part of the active site. Residues Glu145, Glu169, and His355 each contribute to the Zn(2+) site.

Belongs to the peptidase M20A family. ArgE subfamily. Homodimer. The cofactor is Zn(2+). Co(2+) serves as cofactor. It depends on glutathione as a cofactor.

The protein resides in the cytoplasm. The enzyme catalyses N(2)-acetyl-L-ornithine + H2O = L-ornithine + acetate. Its pathway is amino-acid biosynthesis; L-arginine biosynthesis; L-ornithine from N(2)-acetyl-L-ornithine (linear): step 1/1. Catalyzes the hydrolysis of the amide bond of N(2)-acetylated L-amino acids. Cleaves the acetyl group from N-acetyl-L-ornithine to form L-ornithine, an intermediate in L-arginine biosynthesis pathway, and a branchpoint in the synthesis of polyamines. This is Acetylornithine deacetylase from Shigella dysenteriae serotype 1 (strain Sd197).